The following is a 221-amino-acid chain: GTP-binding nuclear protein Ran/TC4 (221 aa).

Residues 10-174 (DYPSFKLVIV…LYLARKLAGD (165 aa)) form the Small GTPase Ran-type domain. A GTP-binding site is contributed by 21–28 (DGGTGKTT). Residues 40–48 (KKYEPTIGV) form a switch-I region. GTP-binding positions include G71, 125-128 (NKVD), and 153-155 (SAK). The interval 71 to 87 (GQEKFGGLRDGYYIHGQ) is switch-II.

This sequence belongs to the small GTPase superfamily. Ran family. In terms of assembly, found in a nuclear export complex with RanGTP, exportin and pre-miRNA.

Its subcellular location is the nucleus. In terms of biological role, GTP-binding protein involved in nucleocytoplasmic transport. Required for the import of protein into the nucleus and also for RNA export. Involved in chromatin condensation and control of cell cycle. The polypeptide is GTP-binding nuclear protein Ran/TC4 (Vicia faba (Broad bean)).